A 237-amino-acid polypeptide reads, in one-letter code: Phosphoribosylaminoimidazole-succinocarboxamide synthase (237 aa).

Belongs to the SAICAR synthetase family.

It carries out the reaction 5-amino-1-(5-phospho-D-ribosyl)imidazole-4-carboxylate + L-aspartate + ATP = (2S)-2-[5-amino-1-(5-phospho-beta-D-ribosyl)imidazole-4-carboxamido]succinate + ADP + phosphate + 2 H(+). Its pathway is purine metabolism; IMP biosynthesis via de novo pathway; 5-amino-1-(5-phospho-D-ribosyl)imidazole-4-carboxamide from 5-amino-1-(5-phospho-D-ribosyl)imidazole-4-carboxylate: step 1/2. The protein is Phosphoribosylaminoimidazole-succinocarboxamide synthase of Hamiltonella defensa subsp. Acyrthosiphon pisum (strain 5AT).